The chain runs to 151 residues: HTH-type transcriptional regulator FL11 (151 aa).

Residues 5–66 form the HTH asnC-type domain; it reads LDDIDKKIIE…VVNPEALGYN (62 aa). The H-T-H motif DNA-binding region spans 24–43; that stretch reads LREISKITGLAESTIHERIK. L-arginine is bound at residue 98 to 104; it reads ETTGDYD. Residues N118, D122, and 133 to 135 contribute to the L-lysine site; that span reads THT. L-arginine-binding positions include D122 and 133-135; that span reads THT.

Homodimer. Binds DNA as a dimer and an octamer.

Its activity is regulated as follows. In the famine mode, FL11 forms dimers and acts as a repressor, leading to growth arrest. In the feast mode, in the presence of high concentrations of lysine or arginine, four dimers assemble into an octamer and cover the fl11 and lysine biosynthesis promoters. This leads to the inhibition of fl11 expression and lysine biosynthesis, decrease of the FL11 concentration in the cell, derepression of the target genes and activation of the metabolism. In terms of biological role, DNA-binding protein involved in the repression of transcription of a large number of genes, thereby arresting growth, in response to environmental changes. The polypeptide is HTH-type transcriptional regulator FL11 (Pyrococcus furiosus (strain ATCC 43587 / DSM 3638 / JCM 8422 / Vc1)).